A 925-amino-acid polypeptide reads, in one-letter code: Bifunctional imidazolonepropionase/histidine ammonia-lyase (925 aa).

Positions 1-414 (MTKNSSTVFT…IKPHVRMEPF (414 aa)) are imidazolonepropionase. Fe(3+) is bound by residues histidine 73 and histidine 75. Residues histidine 73 and histidine 75 each contribute to the Zn(2+) site. Positions 82, 145, and 178 each coordinate 4-imidazolone-5-propanoate. Position 145 (tyrosine 145) interacts with N-formimidoyl-L-glutamate. Histidine 243 lines the Fe(3+) pocket. A Zn(2+)-binding site is contributed by histidine 243. Residue glutamine 246 participates in 4-imidazolone-5-propanoate binding. Aspartate 318 is a binding site for Fe(3+). Aspartate 318 is a binding site for Zn(2+). N-formimidoyl-L-glutamate is bound by residues asparagine 320 and glycine 322. Threonine 323 provides a ligand contact to 4-imidazolone-5-propanoate. A histidine ammonia-lyase region spans residues 415–925 (MTIILKPGSV…SAGILPDLEA (511 aa)). A cross-link (5-imidazolinone (Ala-Gly)) is located at residues 556–558 (ASG). The residue at position 557 (serine 557) is a 2,3-didehydroalanine (Ser).

In the N-terminal section; belongs to the metallo-dependent hydrolases superfamily. HutI family. The protein in the C-terminal section; belongs to the PAL/histidase family. Requires Zn(2+) as cofactor. Fe(3+) serves as cofactor. Contains an active site 4-methylidene-imidazol-5-one (MIO), which is formed autocatalytically by cyclization and dehydration of residues Ala-Ser-Gly.

Its subcellular location is the cytoplasm. The enzyme catalyses 4-imidazolone-5-propanoate + H2O = N-formimidoyl-L-glutamate. The catalysed reaction is L-histidine = trans-urocanate + NH4(+). Its pathway is amino-acid degradation; L-histidine degradation into L-glutamate; N-formimidoyl-L-glutamate from L-histidine: step 1/3. It participates in amino-acid degradation; L-histidine degradation into L-glutamate; N-formimidoyl-L-glutamate from L-histidine: step 3/3. Its function is as follows. Catalyzes the hydrolytic cleavage of the carbon-nitrogen bond in imidazolone-5-propanoate to yield N-formimidoyl-L-glutamate. It is the third step in the universal histidine degradation pathway. This is Bifunctional imidazolonepropionase/histidine ammonia-lyase (hutIH) from Brucella melitensis biotype 1 (strain ATCC 23456 / CCUG 17765 / NCTC 10094 / 16M).